The sequence spans 138 residues: Putative pre-16S rRNA nuclease (138 aa).

Belongs to the YqgF nuclease family.

It localises to the cytoplasm. Could be a nuclease involved in processing of the 5'-end of pre-16S rRNA. The protein is Putative pre-16S rRNA nuclease (yrrK) of Bacillus subtilis (strain 168).